Reading from the N-terminus, the 851-residue chain is Molybdenum cofactor sulfurase (851 aa).

Position 249 is an N6-(pyridoxal phosphate)lysine (K249). C413 is an active-site residue. In terms of domain architecture, MOSC spans 665–844; the sequence is QYLRKFVMPG…LMVGDIVTPS (180 aa).

The protein belongs to the class-V pyridoxal-phosphate-dependent aminotransferase family. MOCOS subfamily. The cofactor is pyridoxal 5'-phosphate.

The enzyme catalyses Mo-molybdopterin + L-cysteine + AH2 = thio-Mo-molybdopterin + L-alanine + A + H2O. It participates in cofactor biosynthesis; molybdopterin biosynthesis. Sulfurates the molybdenum cofactor. Sulfation of molybdenum is essential for xanthine dehydrogenase (XDH) and aldehyde oxidase (ADO) enzymes in which molybdenum cofactor is liganded by 1 oxygen and 1 sulfur atom in active form. This is Molybdenum cofactor sulfurase from Neosartorya fischeri (strain ATCC 1020 / DSM 3700 / CBS 544.65 / FGSC A1164 / JCM 1740 / NRRL 181 / WB 181) (Aspergillus fischerianus).